Consider the following 287-residue polypeptide: ATP synthase gamma chain (287 aa).

This sequence belongs to the ATPase gamma chain family. As to quaternary structure, F-type ATPases have 2 components, CF(1) - the catalytic core - and CF(0) - the membrane proton channel. CF(1) has five subunits: alpha(3), beta(3), gamma(1), delta(1), epsilon(1). CF(0) has three main subunits: a, b and c.

Its subcellular location is the cell inner membrane. Produces ATP from ADP in the presence of a proton gradient across the membrane. The gamma chain is believed to be important in regulating ATPase activity and the flow of protons through the CF(0) complex. The sequence is that of ATP synthase gamma chain from Yersinia enterocolitica serotype O:8 / biotype 1B (strain NCTC 13174 / 8081).